Reading from the N-terminus, the 962-residue chain is Protease 3 (962 aa).

An N-terminal signal peptide occupies residues 1–23 (MPRSTWFKALLLLVALWGPAVQA). His-88 is a Zn(2+) binding site. Glu-91 functions as the Proton acceptor in the catalytic mechanism. Zn(2+) is bound by residues His-92 and Glu-169.

The protein belongs to the peptidase M16 family. In terms of assembly, monomer. It depends on Zn(2+) as a cofactor.

Its subcellular location is the periplasm. It catalyses the reaction Preferential cleavage of 16-Tyr-|-Leu-17 and 25-Phe-|-Tyr-26 bonds of oxidized insulin B chain. Also acts on other substrates of Mw less than 7 kDa such as insulin and glucagon.. Its function is as follows. Endopeptidase that degrades small peptides of less than 7 kDa, such as glucagon and insulin. This Salmonella typhimurium (strain LT2 / SGSC1412 / ATCC 700720) protein is Protease 3 (ptrA).